We begin with the raw amino-acid sequence, 158 residues long: Superoxide dismutase [Cu-Zn] (158 aa).

Cu cation contacts are provided by histidine 46, histidine 48, and histidine 63. Residues cysteine 57 and cysteine 149 are joined by a disulfide bond. The Zn(2+) site is built by histidine 63, histidine 71, histidine 80, and aspartate 83. A Cu cation-binding site is contributed by histidine 120.

It belongs to the Cu-Zn superoxide dismutase family. As to quaternary structure, homodimer. Cu cation serves as cofactor. It depends on Zn(2+) as a cofactor.

The protein localises to the cytoplasm. The catalysed reaction is 2 superoxide + 2 H(+) = H2O2 + O2. Destroys radicals which are normally produced within the cells and which are toxic to biological systems. The sequence is that of Superoxide dismutase [Cu-Zn] (sod-1) from Onchocerca volvulus.